The primary structure comprises 233 residues: Preprocaerulein type-4 (233 aa).

Residues 1-26 (MFKGILLCVLFAVLSANPLSQPEGFA) form the signal peptide. Positions 27-72 (DEERDVRGLASLLGKALKATLKIGTHFLGGAPQQREANDERRFADG) are excised as a propeptide. Gln73 is modified (pyrrolidone carboxylic acid). Residue Tyr76 is modified to Sulfotyrosine. Phe82 carries the post-translational modification Phenylalanine amide. Residues 86–87 (DG) constitute a propeptide that is removed on maturation. Gln88 bears the Pyrrolidone carboxylic acid mark. Position 91 is a sulfotyrosine (Tyr91). A Phenylalanine amide modification is found at Phe97. Residues 101-151 (DDEDDVHERDVRGFGSFLGKALKAALKIGANALGGAPQQREANDERRFADG) constitute a propeptide that is removed on maturation. A Pyrrolidone carboxylic acid modification is found at Gln152. A Sulfotyrosine modification is found at Tyr155. Phe161 bears the Phenylalanine amide mark. Positions 165–215 (DDEDDVNERDVRGFGSFLGKALKAALKIGANALGGSPQQREANDERRFADG) are excised as a propeptide. The interval 197–233 (LGGSPQQREANDERRFADGQQDYTGWMDFGRRNGEDD) is disordered. Gln216 bears the Pyrrolidone carboxylic acid mark. At Tyr219 the chain carries Sulfotyrosine. Phe225 is subject to Phenylalanine amide. Positions 229 to 233 (NGEDD) are excised as a propeptide.

The protein belongs to the gastrin/cholecystokinin family. As to expression, expressed by the skin glands.

The protein localises to the secreted. Its function is as follows. The pharmacological activities of caerulein are quite similar to the physiological activities of gastrin and related peptides. This is Preprocaerulein type-4 from Xenopus laevis (African clawed frog).